The following is a 487-amino-acid chain: Bifunctional protein GlmU (487 aa).

The interval 1-235 (MSHSPTPLAA…PEEASGVNDR (235 aa)) is pyrophosphorylase. Residues 13-16 (LAAG), Lys27, Gln82, 87-88 (GT), 110-112 (SGD), Gly147, Glu162, Asn177, and Asn233 each bind UDP-N-acetyl-alpha-D-glucosamine. Asp112 is a Mg(2+) binding site. Mg(2+) is bound at residue Asn233. The interval 236 to 256 (EELARAGRVLLRRRASELMRS) is linker. The interval 257-487 (GVTIEDPERF…ADSPRGGRAS (231 aa)) is N-acetyltransferase. UDP-N-acetyl-alpha-D-glucosamine contacts are provided by Arg339 and Lys357. Catalysis depends on His369, which acts as the Proton acceptor. Residues Tyr372 and Asn383 each coordinate UDP-N-acetyl-alpha-D-glucosamine. Acetyl-CoA-binding positions include Ala386, 392-393 (NY), Ser411, Ala429, and Arg446. Residues 453–487 (EGWVARRKAEAQNKGAAEAAPAPSPADSPRGGRAS) form a disordered region. Residues 468 to 481 (AAEAAPAPSPADSP) show a composition bias toward low complexity.

It in the N-terminal section; belongs to the N-acetylglucosamine-1-phosphate uridyltransferase family. In the C-terminal section; belongs to the transferase hexapeptide repeat family. In terms of assembly, homotrimer. Mg(2+) is required as a cofactor.

The protein localises to the cytoplasm. It carries out the reaction alpha-D-glucosamine 1-phosphate + acetyl-CoA = N-acetyl-alpha-D-glucosamine 1-phosphate + CoA + H(+). The enzyme catalyses N-acetyl-alpha-D-glucosamine 1-phosphate + UTP + H(+) = UDP-N-acetyl-alpha-D-glucosamine + diphosphate. It functions in the pathway nucleotide-sugar biosynthesis; UDP-N-acetyl-alpha-D-glucosamine biosynthesis; N-acetyl-alpha-D-glucosamine 1-phosphate from alpha-D-glucosamine 6-phosphate (route II): step 2/2. The protein operates within nucleotide-sugar biosynthesis; UDP-N-acetyl-alpha-D-glucosamine biosynthesis; UDP-N-acetyl-alpha-D-glucosamine from N-acetyl-alpha-D-glucosamine 1-phosphate: step 1/1. It participates in bacterial outer membrane biogenesis; LPS lipid A biosynthesis. Catalyzes the last two sequential reactions in the de novo biosynthetic pathway for UDP-N-acetylglucosamine (UDP-GlcNAc). The C-terminal domain catalyzes the transfer of acetyl group from acetyl coenzyme A to glucosamine-1-phosphate (GlcN-1-P) to produce N-acetylglucosamine-1-phosphate (GlcNAc-1-P), which is converted into UDP-GlcNAc by the transfer of uridine 5-monophosphate (from uridine 5-triphosphate), a reaction catalyzed by the N-terminal domain. The chain is Bifunctional protein GlmU from Anaeromyxobacter sp. (strain Fw109-5).